Here is a 137-residue protein sequence, read N- to C-terminus: Nucleoside diphosphate kinase (137 aa).

Residues K9, F57, R85, T91, and R102 each contribute to the ATP site. Residue H119 is the Pros-phosphohistidine intermediate of the active site.

It belongs to the NDK family. Homotetramer. Mg(2+) is required as a cofactor.

The protein resides in the cytoplasm. It carries out the reaction a 2'-deoxyribonucleoside 5'-diphosphate + ATP = a 2'-deoxyribonucleoside 5'-triphosphate + ADP. The enzyme catalyses a ribonucleoside 5'-diphosphate + ATP = a ribonucleoside 5'-triphosphate + ADP. Its function is as follows. Major role in the synthesis of nucleoside triphosphates other than ATP. The ATP gamma phosphate is transferred to the NDP beta phosphate via a ping-pong mechanism, using a phosphorylated active-site intermediate. This is Nucleoside diphosphate kinase from Streptococcus thermophilus (strain CNRZ 1066).